The primary structure comprises 213 residues: Large ribosomal subunit protein uL4 (213 aa).

The disordered stretch occupies residues 41-75 (GTASTKTRAEVSRSGKKMYSQKGTGNARHGDRSVP).

This sequence belongs to the universal ribosomal protein uL4 family. Part of the 50S ribosomal subunit.

One of the primary rRNA binding proteins, this protein initially binds near the 5'-end of the 23S rRNA. It is important during the early stages of 50S assembly. It makes multiple contacts with different domains of the 23S rRNA in the assembled 50S subunit and ribosome. Its function is as follows. Forms part of the polypeptide exit tunnel. The sequence is that of Large ribosomal subunit protein uL4 from Deinococcus geothermalis (strain DSM 11300 / CIP 105573 / AG-3a).